Consider the following 102-residue polypeptide: MNKLMKQAQKIQEKMKLIQEEISKLEAIGESGAGLVKIKLNGSRYCNYVKIDNSLLKDKEMLEDLIVAAFNDAIRRISEIQQEKIASVSSSIQIPEGFKMPF.

It belongs to the YbaB/EbfC family. In terms of assembly, homodimer.

It localises to the cytoplasm. It is found in the nucleoid. Binds to DNA and alters its conformation. May be involved in regulation of gene expression, nucleoid organization and DNA protection. The sequence is that of Nucleoid-associated protein WIGBR5260 from Wigglesworthia glossinidia brevipalpis.